The primary structure comprises 1221 residues: DNA-directed RNA polymerase subunit beta (1221 aa).

The segment at 1176 to 1221 is disordered; it reads EKKKLAEEEAEIAAEAEAEGSAEEDAAEADADANEAETADDDKASK. Over residues 1183-1215 the composition is skewed to acidic residues; that stretch reads EEAEIAAEAEAEGSAEEDAAEADADANEAETAD.

This sequence belongs to the RNA polymerase beta chain family. As to quaternary structure, the RNAP catalytic core consists of 2 alpha, 1 beta, 1 beta' and 1 omega subunit. When a sigma factor is associated with the core the holoenzyme is formed, which can initiate transcription.

The enzyme catalyses RNA(n) + a ribonucleoside 5'-triphosphate = RNA(n+1) + diphosphate. In terms of biological role, DNA-dependent RNA polymerase catalyzes the transcription of DNA into RNA using the four ribonucleoside triphosphates as substrates. The protein is DNA-directed RNA polymerase subunit beta of Lactobacillus delbrueckii subsp. bulgaricus (strain ATCC BAA-365 / Lb-18).